The following is a 185-amino-acid chain: Large ribosomal subunit protein uL5 (185 aa).

It belongs to the universal ribosomal protein uL5 family. Part of the 50S ribosomal subunit; part of the 5S rRNA/L5/L18/L25 subcomplex. Contacts the 5S rRNA and the P site tRNA. Forms a bridge to the 30S subunit in the 70S ribosome.

Its function is as follows. This is one of the proteins that bind and probably mediate the attachment of the 5S RNA into the large ribosomal subunit, where it forms part of the central protuberance. In the 70S ribosome it contacts protein S13 of the 30S subunit (bridge B1b), connecting the 2 subunits; this bridge is implicated in subunit movement. Contacts the P site tRNA; the 5S rRNA and some of its associated proteins might help stabilize positioning of ribosome-bound tRNAs. The sequence is that of Large ribosomal subunit protein uL5 from Chelativorans sp. (strain BNC1).